The sequence spans 321 residues: UPF0026 protein MJ1312 (321 aa).

Residues 11–236 (RRLGKSLGIN…AIFNEIIGKN (226 aa)) enclose the Radical SAM core domain. [4Fe-4S] cluster is bound by residues Cys27, Cys31, and Cys34.

This sequence belongs to the UPF0026 family. [4Fe-4S] cluster is required as a cofactor.

In Methanocaldococcus jannaschii (strain ATCC 43067 / DSM 2661 / JAL-1 / JCM 10045 / NBRC 100440) (Methanococcus jannaschii), this protein is UPF0026 protein MJ1312.